The chain runs to 138 residues: UPF0047 protein MJ1081 (138 aa).

This sequence belongs to the UPF0047 family.

The polypeptide is UPF0047 protein MJ1081 (Methanocaldococcus jannaschii (strain ATCC 43067 / DSM 2661 / JAL-1 / JCM 10045 / NBRC 100440) (Methanococcus jannaschii)).